The sequence spans 523 residues: Cytochrome P450 monooxygenase ple5B (523 aa).

A helical transmembrane segment spans residues 16 to 33 (IAAAAAGSAVAVYKLLQL). Asparagine 82, asparagine 103, asparagine 122, asparagine 295, asparagine 379, and asparagine 423 each carry an N-linked (GlcNAc...) asparagine glycan. Cysteine 446 serves as a coordination point for heme.

The protein belongs to the cytochrome P450 family. The cofactor is heme.

The protein resides in the membrane. It functions in the pathway secondary metabolite biosynthesis; terpenoid biosynthesis. In terms of biological role, cytochrome P450 monooxygenase; part of the gene cluster that mediates the biosynthesis of pleuromutilin, a tricyclic diterpene showing antibacterial properties. The geranylgeranyl diphosphate (GGPP) synthase ple4 catalyzes the first step in pleuromutilin biosynthesis. GGPP is then substrate of the premutilin synthase (PS) ple3 to yield premutilin. Premutilin synthase is a bifunctional enzyme composed of the fusion of a class II diterpene cyclase (DTC) and a class I diterpene synthase (DTS), with the corresponding domains and active sites containing characteristic aspartate-rich motifs. GGPP is first converted to mutildienyl-diphosphate (MPP) at the class II DTC site. MPP is subsequently further cyclized at the class I DTS site, followed by a 1,5-hydride shift and addition of water prior to terminating deprotonation, to yield premutilin. The cytochrome P450 monooxygenases ple5 and ple6 hydroxylate premutilin at C-11 and C-3, respectively, producing 11-hydroxypremutilin and 3-hydroxypremutilin. The combination of the actions of both ple5 and ple6 leads to the production of 3,11-dihydroxypremutilin. The short chain dehydrogenase ple7 further converts 3,11-dihydroxypremutilin into mutilin. The acetyltransferase ple2 then acetylates mutilin to produce 14-O-acetylmutilin. Finally, the cytochrome P450 monooxygenase ple1 catalyzes hydroxylation on the alpha position of the acetyl side chain of 14-O-acetylmutilin to yield pleuromutilin. The chain is Cytochrome P450 monooxygenase ple5B from Rhodocybe pseudopiperita (Clitopilus pseudopiperitus).